We begin with the raw amino-acid sequence, 506 residues long: Histidine ammonia-lyase (506 aa).

A cross-link (5-imidazolinone (Ala-Gly)) is located at residues Ala-143–Gly-145. Ser-144 carries the post-translational modification 2,3-didehydroalanine (Ser).

The protein belongs to the PAL/histidase family. Contains an active site 4-methylidene-imidazol-5-one (MIO), which is formed autocatalytically by cyclization and dehydration of residues Ala-Ser-Gly.

The protein resides in the cytoplasm. The catalysed reaction is L-histidine = trans-urocanate + NH4(+). Its pathway is amino-acid degradation; L-histidine degradation into L-glutamate; N-formimidoyl-L-glutamate from L-histidine: step 1/3. The protein is Histidine ammonia-lyase of Salmonella paratyphi A (strain ATCC 9150 / SARB42).